Consider the following 185-residue polypeptide: Ribosome-recycling factor (185 aa).

Belongs to the RRF family.

The protein localises to the cytoplasm. Responsible for the release of ribosomes from messenger RNA at the termination of protein biosynthesis. May increase the efficiency of translation by recycling ribosomes from one round of translation to another. The polypeptide is Ribosome-recycling factor (Legionella pneumophila (strain Corby)).